The sequence spans 429 residues: Phosphoribosylamine--glycine ligase (429 aa).

The ATP-grasp domain occupies 109 to 316; that stretch reads KDFLARHKIP…LVELCLKACD (208 aa). 135 to 196 lines the ATP pocket; it reads LREKGTPIVV…EEFLDGEEAS (62 aa). Positions 286 and 288 each coordinate Mg(2+).

It belongs to the GARS family. The cofactor is Mg(2+). Mn(2+) serves as cofactor.

It catalyses the reaction 5-phospho-beta-D-ribosylamine + glycine + ATP = N(1)-(5-phospho-beta-D-ribosyl)glycinamide + ADP + phosphate + H(+). It functions in the pathway purine metabolism; IMP biosynthesis via de novo pathway; N(1)-(5-phospho-D-ribosyl)glycinamide from 5-phospho-alpha-D-ribose 1-diphosphate: step 2/2. The protein is Phosphoribosylamine--glycine ligase of Haemophilus influenzae (strain ATCC 51907 / DSM 11121 / KW20 / Rd).